A 279-amino-acid chain; its full sequence is Ribose-phosphate pyrophosphokinase (279 aa).

ATP-binding positions include 31 to 33 and 88 to 89; these read DGE and RQ. Positions 121 and 159 each coordinate Mg(2+). Lys-182 is an active-site residue. Residues Arg-184, Asp-208, and 212–216 contribute to the D-ribose 5-phosphate site; that span reads STGGT.

Belongs to the ribose-phosphate pyrophosphokinase family. Class III (archaeal) subfamily. The cofactor is Mg(2+).

It localises to the cytoplasm. It carries out the reaction D-ribose 5-phosphate + ATP = 5-phospho-alpha-D-ribose 1-diphosphate + AMP + H(+). It participates in metabolic intermediate biosynthesis; 5-phospho-alpha-D-ribose 1-diphosphate biosynthesis; 5-phospho-alpha-D-ribose 1-diphosphate from D-ribose 5-phosphate (route I): step 1/1. In terms of biological role, involved in the biosynthesis of the central metabolite phospho-alpha-D-ribosyl-1-pyrophosphate (PRPP) via the transfer of pyrophosphoryl group from ATP to 1-hydroxyl of ribose-5-phosphate (Rib-5-P). The sequence is that of Ribose-phosphate pyrophosphokinase from Pyrococcus furiosus (strain ATCC 43587 / DSM 3638 / JCM 8422 / Vc1).